We begin with the raw amino-acid sequence, 308 residues long: tRNA dimethylallyltransferase 1 (308 aa).

9–16 (GPTGVGKT) is an ATP binding site. 11–16 (TGVGKT) serves as a coordination point for substrate. Positions 34–37 (DSRQ) are interaction with substrate tRNA.

The protein belongs to the IPP transferase family. As to quaternary structure, monomer. Mg(2+) serves as cofactor.

It carries out the reaction adenosine(37) in tRNA + dimethylallyl diphosphate = N(6)-dimethylallyladenosine(37) in tRNA + diphosphate. Catalyzes the transfer of a dimethylallyl group onto the adenine at position 37 in tRNAs that read codons beginning with uridine, leading to the formation of N6-(dimethylallyl)adenosine (i(6)A). The polypeptide is tRNA dimethylallyltransferase 1 (Bacteroides thetaiotaomicron (strain ATCC 29148 / DSM 2079 / JCM 5827 / CCUG 10774 / NCTC 10582 / VPI-5482 / E50)).